Reading from the N-terminus, the 463-residue chain is Fibrinogen beta chain (463 aa).

Over residues 1–12 (ASVEYDNEEDSP) the composition is skewed to acidic residues. The interval 1–56 (ASVEYDNEEDSPQIDARAHRPLDKRQEAAPTLRPVAPPISGTGYQPRPPKQDKQAM) is disordered. Sulfotyrosine is present on Tyr5. The span at 16–27 (ARAHRPLDKRQE) shows a compositional bias: basic and acidic residues. 2 disulfide bridges follow: Cys205–Cys289 and Cys215–Cys244. One can recognise a Fibrinogen C-terminal domain in the interval 206–461 (NIPVVSGREC…KMSMKIKPYF (256 aa)). Residue Asn367 is glycosylated (N-linked (GlcNAc...) asparagine). Ca(2+) is bound by residues Asp384, Asp386, and Trp388. Cysteines 397 and 410 form a disulfide.

In terms of assembly, heterohexamer; disulfide linked. Contains 2 sets of 3 non-identical chains (alpha, beta and gamma). The 2 heterotrimers are in head to head conformation with the N-termini in a small central domain. Conversion of fibrinogen to fibrin is triggered by thrombin, which cleaves fibrinopeptides A and B from alpha and beta chains, and thus exposes the N-terminal polymerization sites responsible for the formation of the soft clot. The soft clot is converted into the hard clot by factor XIIIA which catalyzes the epsilon-(gamma-glutamyl)lysine cross-linking between gamma chains (stronger) and between alpha chains (weaker) of different monomers.

The protein localises to the secreted. Its function is as follows. Cleaved by the protease thrombin to yield monomers which, together with fibrinogen alpha (FGA) and fibrinogen gamma (FGG), polymerize to form an insoluble fibrin matrix. Fibrin has a major function in hemostasis as one of the primary components of blood clots. The chain is Fibrinogen beta chain (FGB) from Gallus gallus (Chicken).